The following is a 194-amino-acid chain: Peptidyl-tRNA hydrolase (194 aa).

A tRNA-binding site is contributed by Y17. Residue H22 is the Proton acceptor of the active site. Y68, N70, and N115 together coordinate tRNA.

It belongs to the PTH family. Monomer.

The protein resides in the cytoplasm. The catalysed reaction is an N-acyl-L-alpha-aminoacyl-tRNA + H2O = an N-acyl-L-amino acid + a tRNA + H(+). Functionally, hydrolyzes ribosome-free peptidyl-tRNAs (with 1 or more amino acids incorporated), which drop off the ribosome during protein synthesis, or as a result of ribosome stalling. Its function is as follows. Catalyzes the release of premature peptidyl moieties from peptidyl-tRNA molecules trapped in stalled 50S ribosomal subunits, and thus maintains levels of free tRNAs and 50S ribosomes. The protein is Peptidyl-tRNA hydrolase of Pseudoalteromonas atlantica (strain T6c / ATCC BAA-1087).